Here is a 200-residue protein sequence, read N- to C-terminus: Dual-action ribosomal maturation protein DarP (200 aa).

Disordered regions lie at residues 1–25 and 177–200; these read MTRK…DRPS and TASG…DDEA. Residues 12–25 are compositionally biased toward basic and acidic residues; it reads HAAEVDDNGYDRPS. Over residues 184–200 the composition is skewed to acidic residues; the sequence is GDDEAADEAGDDHDDEA.

This sequence belongs to the DarP family.

It is found in the cytoplasm. Functionally, member of a network of 50S ribosomal subunit biogenesis factors which assembles along the 30S-50S interface, preventing incorrect 23S rRNA structures from forming. Promotes peptidyl transferase center (PTC) maturation. This is Dual-action ribosomal maturation protein DarP from Burkholderia ambifaria (strain MC40-6).